The chain runs to 425 residues: Receptor-like protein 55 (425 aa).

A signal peptide spans M1–S25. At Y26–T397 the chain is on the extracellular side. 4 N-linked (GlcNAc...) asparagine glycosylation sites follow: N40, N54, N79, and N132. 7 LRR repeats span residues L144–N169, M170–S193, L195–L216, K217–L240, F242–I264, S265–E287, and M288–K313. N-linked (GlcNAc...) asparagine glycosylation is found at N182, N202, N223, N245, N278, N308, and N329. Residues P355–E389 are disordered. The segment covering N374 to E389 has biased composition (basic and acidic residues). Residue N395 is glycosylated (N-linked (GlcNAc...) asparagine). Residues L398–L418 form a helical membrane-spanning segment. At A419–I425 the chain is on the cytoplasmic side.

The protein belongs to the RLP family.

Its subcellular location is the cell membrane. Involved in plant defense. The protein is Receptor-like protein 55 of Arabidopsis thaliana (Mouse-ear cress).